A 260-amino-acid chain; its full sequence is Hydroxyacylglutathione hydrolase (260 aa).

7 residues coordinate Zn(2+): His-66, His-68, Asp-70, His-71, His-125, Asp-150, and His-188.

Belongs to the metallo-beta-lactamase superfamily. Glyoxalase II family. Monomer. The cofactor is Zn(2+).

It carries out the reaction an S-(2-hydroxyacyl)glutathione + H2O = a 2-hydroxy carboxylate + glutathione + H(+). Its pathway is secondary metabolite metabolism; methylglyoxal degradation; (R)-lactate from methylglyoxal: step 2/2. Its function is as follows. Thiolesterase that catalyzes the hydrolysis of S-D-lactoyl-glutathione to form glutathione and D-lactic acid. This Prochlorococcus marinus (strain MIT 9303) protein is Hydroxyacylglutathione hydrolase.